Consider the following 689-residue polypeptide: Small ribosomal subunit protein mS39 (689 aa).

The transit peptide at 1–37 directs the protein to the mitochondrion; it reads MAGVSAVRWLGLRSRLGQPLTGRRAGLCKQARSCRFY. K126 carries the N6-acetyllysine modification. PPR repeat units lie at residues 149–183, 184–219, 255–289, 290–330, 331–367, 368–404, 412–446, 454–488, 489–523, and 572–606; these read IKDI…GTTV, SLET…EALE, NAHS…RLHA, DVYT…KVKP, NLQT…GIEP, SLAT…MGKR, DDKF…DNWK, RNFY…VYFP, HSQT…GHTF, and PATS…NKIP. A disordered region spans residues 665–689; sequence NLTALTSDSDTDSSSDSDSDTSEGK. The span at 673 to 689 shows a compositional bias: acidic residues; that stretch reads SDTDSSSDSDSDTSEGK.

This sequence belongs to the mitochondrion-specific ribosomal protein mS39 family. As to quaternary structure, component of the mitochondrial ribosome small subunit (28S) which comprises a 12S rRNA and about 30 distinct proteins. Associated with the 12S mitochondrial rRNA (12S mt-rRNA).

It localises to the mitochondrion. Functionally, mitochondrial RNA-binding protein that has a role in mitochondrial translation. In Pongo abelii (Sumatran orangutan), this protein is Small ribosomal subunit protein mS39 (PTCD3).